The chain runs to 668 residues: MNQIHSTILKKGILNIKPQIRNITKCTNTINYNNNNINNRYFTSINKNKNIENLLQQQPQQQPQQQLQQQPILFVQNQNNINYFKREYTNIGGTSPNRQSVPENSTTKTTATATVETDNVVNSSTTFTLPKEVEEEIIDKNERGKEQEQENKQQKEQKDDNKSGSIFSIKGWLTISILSVLALGTKLVIDPPQNIDKLDLAFIRNLRVLYAGFKITFYYKYYLMGLNRGDEGFAENIQIAHKLAAKAMVDLCYQNKGIFIKVAQIIASLDHILPQEYIKSLSIFQDHAPFVTFEEVEKLFKIETGKHPDDMFIDFERLPINSASLAQVHKAKLKLENDEIIEVAVKVQYPGLMNKFQKDMDSLDNVLTYITLFFPSFQFSWILGEASSCLSQELDFVNEAKNSEKMKQLFIGNQQLSIPKVYWNHTTKRILTMEFIHGVRIDNREGLDKLGIDLKELYYLFSDIFAQQIFVHGFLHSDPHPGNLLVRKTPNGKPDLVLLDHGLYKKIDENVRLDFCHLWKSLCLGDAKTSEFYAERLGAGIYAKHLGILLNLNPSKSRENLRNMKRELKDQTLVVINEILKNLPKEILLVLKTNNLIRQITTHFGIENGFLNMAKTCIKGIYTGNDIITKLKYYLTLCIFNIEIKVIDFIKKRKPPQVEIPSTYHHHH.

2 disordered regions span residues Y88–A111 and E132–K162. A compositionally biased stretch (polar residues) spans I91–S105. The stretch at K131–S163 forms a coiled coil. A compositionally biased stretch (basic and acidic residues) spans I138 to K162. The 355-residue stretch at D314–H668 folds into the Protein kinase domain. ATP contacts are provided by residues I320 to V328 and K346. The active-site Proton acceptor is D478.

Belongs to the protein kinase superfamily. ADCK protein kinase family.

The chain is Probable serine/threonine-protein kinase abkB (abkB) from Dictyostelium discoideum (Social amoeba).